A 657-amino-acid polypeptide reads, in one-letter code: Conserved oligomeric Golgi complex subunit 6 (657 aa).

It belongs to the COG6 family. As to quaternary structure, component of the conserved oligomeric Golgi complex which is composed of eight different subunits and is required for normal Golgi morphology and localization.

It is found in the golgi apparatus membrane. Its function is as follows. Required for normal Golgi function. The polypeptide is Conserved oligomeric Golgi complex subunit 6 (COG6) (Homo sapiens (Human)).